The chain runs to 314 residues: uncharacterized protein (314 aa).

Basic residues-rich tracts occupy residues 1–16 (MAGN…KAGT) and 49–65 (AAKR…RRPA). The interval 1 to 73 (MAGNSKRRGA…PARKTDETEL (73 aa)) is disordered. Residues Gly266, Ile286, and Leu295 each contribute to the S-adenosyl-L-methionine site.

This sequence belongs to the class IV-like SAM-binding methyltransferase superfamily. RNA methyltransferase TrmH family.

This is an uncharacterized protein from Mycobacterium sp. (strain KMS).